The chain runs to 746 residues: Taurocyamine kinase (746 aa).

Approximate repeat units lie at residues 31-393 (MQVE…PEGV) and 394-705 (MPVE…YGEH). The Phosphagen kinase N-terminal 1 domain occupies 35 to 116 (SLQNLQAKIR…FDAVIADYHK (82 aa)). The region spanning 146 to 382 (LVVSTRVRLG…RALLELEVML (237 aa)) is the Phosphagen kinase C-terminal 1 domain. Residues 149–153 (STRVR), histidine 212, and arginine 256 each bind ATP. Residue cysteine 298 is part of the active site. ATP-binding positions include 307–311 (RASVH) and 335–340 (RGTHGE). The region spanning 398-479 (PLTYLAKLLE…LDPLICDYHG (82 aa)) is the Phosphagen kinase N-terminal 2 domain. In terms of domain architecture, Phosphagen kinase C-terminal 2 spans 509 to 746 (FIVSTRVRVG…AKMIEIEKGL (238 aa)). ATP-binding positions include 512–516 (STRVR), histidine 575, and arginine 619. Residue cysteine 661 is part of the active site. ATP-binding positions include 670–674 (RASVL) and 699–704 (RGLYGE).

It belongs to the ATP:guanido phosphotransferase family. It depends on Mg(2+) as a cofactor.

The enzyme catalyses taurocyamine + ATP = N-phosphotaurocyamine + ADP + H(+). In terms of biological role, this family of enzymes reversibly catalyzes the transfer of phosphate between ATP and various phosphogens (e.g. creatine phosphate). The sequence is that of Taurocyamine kinase from Schistosoma mansoni (Blood fluke).